The chain runs to 346 residues: Glycerol-3-phosphate dehydrogenase [NAD(P)+] (346 aa).

NADPH is bound by residues S11, W12, H32, R33, and K106. Residues K106, G137, and S139 each coordinate sn-glycerol 3-phosphate. Position 141 (A141) interacts with NADPH. Sn-glycerol 3-phosphate is bound by residues K193, D246, S256, R257, and N258. K193 functions as the Proton acceptor in the catalytic mechanism. R257 provides a ligand contact to NADPH. 2 residues coordinate NADPH: V281 and E283.

The protein belongs to the NAD-dependent glycerol-3-phosphate dehydrogenase family.

The protein resides in the cytoplasm. It catalyses the reaction sn-glycerol 3-phosphate + NAD(+) = dihydroxyacetone phosphate + NADH + H(+). It carries out the reaction sn-glycerol 3-phosphate + NADP(+) = dihydroxyacetone phosphate + NADPH + H(+). It functions in the pathway membrane lipid metabolism; glycerophospholipid metabolism. Catalyzes the reduction of the glycolytic intermediate dihydroxyacetone phosphate (DHAP) to sn-glycerol 3-phosphate (G3P), the key precursor for phospholipid synthesis. This chain is Glycerol-3-phosphate dehydrogenase [NAD(P)+], found in Bacillus licheniformis (strain ATCC 14580 / DSM 13 / JCM 2505 / CCUG 7422 / NBRC 12200 / NCIMB 9375 / NCTC 10341 / NRRL NRS-1264 / Gibson 46).